Reading from the N-terminus, the 333-residue chain is MDERLLSGESAYEDADLEYSLRPQTLRQYIGQDKAKHNLEVFIEAAKMREETLDHVLLYGPPGLGKTTLANIIANEMGVNVRTTSGPAIERPGDLAAVLTSLQPGDVLFIDEIHRLHRSIEEVLYPAMEDFCLDIVIGKGPSARSVRLDLPPFTLVGATTRAGALSAPLRDRFGVLSRLEYYTVDQLSEIVERTAEVFEVEIDSLAALEIARRARGTPRIANRLLRRVRDFAQVRGNGTVTMEITQMALELLQVDKLGLDHIDHKLLLGIIEKFRGGPVGLETVSATIGEESHTIEDVYEPYLLQIGFLQRTPRGRIVTPLAYEHFGMEMPKV.

The large ATPase domain (RuvB-L) stretch occupies residues 1 to 182 (MDERLLSGES…FGVLSRLEYY (182 aa)). ATP contacts are provided by residues L21, R22, G63, K66, T67, T68, 129-131 (EDF), R172, Y182, and R219. T67 is a binding site for Mg(2+). Positions 183–253 (TVDQLSEIVE…ITQMALELLQ (71 aa)) are small ATPAse domain (RuvB-S). Residues 256-333 (KLGLDHIDHK…EHFGMEMPKV (78 aa)) are head domain (RuvB-H). R311 and R316 together coordinate DNA.

This sequence belongs to the RuvB family. In terms of assembly, homohexamer. Forms an RuvA(8)-RuvB(12)-Holliday junction (HJ) complex. HJ DNA is sandwiched between 2 RuvA tetramers; dsDNA enters through RuvA and exits via RuvB. An RuvB hexamer assembles on each DNA strand where it exits the tetramer. Each RuvB hexamer is contacted by two RuvA subunits (via domain III) on 2 adjacent RuvB subunits; this complex drives branch migration. In the full resolvosome a probable DNA-RuvA(4)-RuvB(12)-RuvC(2) complex forms which resolves the HJ.

The protein localises to the cytoplasm. The catalysed reaction is ATP + H2O = ADP + phosphate + H(+). Functionally, the RuvA-RuvB-RuvC complex processes Holliday junction (HJ) DNA during genetic recombination and DNA repair, while the RuvA-RuvB complex plays an important role in the rescue of blocked DNA replication forks via replication fork reversal (RFR). RuvA specifically binds to HJ cruciform DNA, conferring on it an open structure. The RuvB hexamer acts as an ATP-dependent pump, pulling dsDNA into and through the RuvAB complex. RuvB forms 2 homohexamers on either side of HJ DNA bound by 1 or 2 RuvA tetramers; 4 subunits per hexamer contact DNA at a time. Coordinated motions by a converter formed by DNA-disengaged RuvB subunits stimulates ATP hydrolysis and nucleotide exchange. Immobilization of the converter enables RuvB to convert the ATP-contained energy into a lever motion, pulling 2 nucleotides of DNA out of the RuvA tetramer per ATP hydrolyzed, thus driving DNA branch migration. The RuvB motors rotate together with the DNA substrate, which together with the progressing nucleotide cycle form the mechanistic basis for DNA recombination by continuous HJ branch migration. Branch migration allows RuvC to scan DNA until it finds its consensus sequence, where it cleaves and resolves cruciform DNA. This Bacillus cereus (strain ATCC 10987 / NRS 248) protein is Holliday junction branch migration complex subunit RuvB.